The sequence spans 444 residues: Cholecystokinin receptor type A (444 aa).

The Extracellular portion of the chain corresponds to 1–56; the sequence is MSHSPARQHLVESSRMDVVDSLLMNGSNITPPCELGLENETLFCLDQPQPSKEWQS. Residues N25 and N39 are each glycosylated (N-linked (GlcNAc...) asparagine). Residues C33 and C44 are joined by a disulfide bond. Residues 57–82 traverse the membrane as a helical segment; it reads ALQILLYSIIFLLSVLGNTLVITVLI. The Cytoplasmic portion of the chain corresponds to 83-92; sequence RNKRMRTVTN. Residues 93–119 traverse the membrane as a helical segment; the sequence is IFLLSLAVSDLMLCLFCMPFNLIPNLL. Topologically, residues 120–130 are extracellular; it reads KDFIFGSAVCK. The cysteines at positions 129 and 211 are disulfide-linked. A helical membrane pass occupies residues 131 to 152; that stretch reads TTTYFMGTSVSVSTFNLVAISL. Over 153–172 the chain is Cytoplasmic; the sequence is ERYGAICRPLQSRVWQTKSH. A helical membrane pass occupies residues 173–193; it reads ALKVIAATWCLSFTIMTPYPI. Residues 194 to 225 lie on the Extracellular side of the membrane; that stretch reads YSNLVPFTKNNNQTANMCRFLLPSDAMQQSWQ. N-linked (GlcNAc...) asparagine glycosylation is present at N205. Residues 226 to 249 traverse the membrane as a helical segment; that stretch reads TFLLLILFLLPGIVMVVAYGLISL. Over 250 to 329 the chain is Cytoplasmic; that stretch reads ELYQGIKFDA…NLIAKKRVIR (80 aa). A disordered region spans residues 263–288; it reads KSAKEKKPSTGSSTRYEDSDGCYLQK. Residues 330–350 traverse the membrane as a helical segment; the sequence is MLIVIVVLFFLCWMPIFSANA. Residues 351 to 365 lie on the Extracellular side of the membrane; it reads WRAYDTVSAEKHLSG. Residues 366 to 389 form a helical membrane-spanning segment; the sequence is TPISFILLLSYTSSCVNPIIYCFM. Topologically, residues 390 to 444 are cytoplasmic; the sequence is NKRFRLGFMATFPCCPNPGPPGVRGEVGEEEDGRTIRALLSRYSYSHMSTSAPPP. A lipid anchor (S-palmitoyl cysteine) is attached at C403.

The protein belongs to the G-protein coupled receptor 1 family. As to expression, pancreas and brain. Also expressed in the gastrointestinal system and vagus nerve.

It is found in the cell membrane. Receptor for cholecystokinin. Mediates pancreatic growth and enzyme secretion, smooth muscle contraction of the gall bladder and stomach. Has a 1000-fold higher affinity for CCK rather than for gastrin. It modulates feeding and dopamine-induced behavior in the central and peripheral nervous system. This receptor mediates its action by association with G proteins that activate a phosphatidylinositol-calcium second messenger system. The protein is Cholecystokinin receptor type A (Cckar) of Rattus norvegicus (Rat).